The chain runs to 282 residues: Type 1 encapsulin shell protein (282 aa).

This sequence belongs to the encapsulin family. Family 1 subfamily. In terms of assembly, initially thought to form a 180 subunit shell. Forms hollow shells composed of 240 subunits, making a shell about 42-43 nm in diameter. The monomer is capable of assuming 4 different conformations which allows packaging into the icosahedron. The shell has 12 pentameric and 30 hexameric capsomers which form the vertices and faces of the icosahedral nanocompartment.

It localises to the encapsulin nanocompartment. In terms of biological role, shell component of a type 1 encapsulin nanocompartment. Assembles into proteinaceous icosahedral shells 42-43 nm in diameter with an iron- and phosphorus-rich core (1Fe:1.1P) which can store over 23,000-35,000 iron atoms (with a calculated maximum of 83,000 Fe). There are 2 types of negatively charged open pores in the cryo-electron structure; a 3-fold pore where 3 hexamers meet with a minimal size of 7.2 Angstroms and a 5-fold pore where pentamers meet with a minimal size of 2.3 Angstroms. The 2-fold pore seen in other encapsulin nanocompartments is closed. Empty compartments can be generated in E.coli. Both types of pore have extra density in their centers in the structure. 2 different cargo proteins have been identified (IMEF and Fer); when both are expressed in E.coli with the shell protein only IMEF is detected within the nanocompartment. E.coli expressing all 3 genes stores the largest amount of iron and is protected from Fe/H2O2-induced oxidative stress. Part of the iron-mineralizing encapsulin-associated Firmicute (IMEF) system. The chain is Type 1 encapsulin shell protein from Bacillus thermotolerans (Quasibacillus thermotolerans).